The chain runs to 236 residues: 2,3,4,5-tetrahydropyridine-2,6-dicarboxylate N-acetyltransferase (236 aa).

It belongs to the transferase hexapeptide repeat family. DapH subfamily.

The enzyme catalyses (S)-2,3,4,5-tetrahydrodipicolinate + acetyl-CoA + H2O = L-2-acetamido-6-oxoheptanedioate + CoA. Its pathway is amino-acid biosynthesis; L-lysine biosynthesis via DAP pathway; LL-2,6-diaminopimelate from (S)-tetrahydrodipicolinate (acetylase route): step 1/3. Its function is as follows. Catalyzes the transfer of an acetyl group from acetyl-CoA to tetrahydrodipicolinate. The polypeptide is 2,3,4,5-tetrahydropyridine-2,6-dicarboxylate N-acetyltransferase (Clostridium perfringens (strain ATCC 13124 / DSM 756 / JCM 1290 / NCIMB 6125 / NCTC 8237 / Type A)).